Consider the following 55-residue polypeptide: MKVIYNTLFKRTSTYAVAIIASAFFFERALDVTSVAIFEGINKGKLWKDIKGKYE.

The Mitochondrial matrix segment spans residues Met1–Tyr15. The chain crosses the membrane as a helical span at residues Ala16 to Ile41. At Asn42–Glu55 the chain is on the chloroplast intermembrane side.

Belongs to the UQCR10/QCR9 family. As to quaternary structure, component of the ubiquinol-cytochrome c oxidoreductase (cytochrome b-c1 complex, complex III, CIII), a multisubunit enzyme composed of 3 respiratory subunits cytochrome b, cytochrome c1 and Rieske protein, 2 core protein subunits, and additional low-molecular weight protein subunits. The complex exists as an obligatory dimer and forms supercomplexes (SCs) in the inner mitochondrial membrane with cytochrome c oxidase (complex IV, CIV).

Its subcellular location is the mitochondrion inner membrane. Functionally, component of the ubiquinol-cytochrome c oxidoreductase, a multisubunit transmembrane complex that is part of the mitochondrial electron transport chain which drives oxidative phosphorylation. The respiratory chain contains 3 multisubunit complexes succinate dehydrogenase (complex II, CII), ubiquinol-cytochrome c oxidoreductase (cytochrome b-c1 complex, complex III, CIII) and cytochrome c oxidase (complex IV, CIV), that cooperate to transfer electrons derived from NADH and succinate to molecular oxygen, creating an electrochemical gradient over the inner membrane that drives transmembrane transport and the ATP synthase. The cytochrome b-c1 complex catalyzes electron transfer from ubiquinol to cytochrome c, linking this redox reaction to translocation of protons across the mitochondrial inner membrane, with protons being carried across the membrane as hydrogens on the quinol. In the process called Q cycle, 2 protons are consumed from the matrix, 4 protons are released into the intermembrane space and 2 electrons are passed to cytochrome c. The chain is Cytochrome b-c1 complex subunit 9 (ox) from Drosophila melanogaster (Fruit fly).